Here is a 611-residue protein sequence, read N- to C-terminus: Adenosylhomocysteinase 3 (611 aa).

Composition is skewed to low complexity over residues 1-14, 40-57, and 68-78; these read MSVQ…AAKV, AMAP…APAA, and GPAAALSPAAG. A disordered region spans residues 1 to 184; the sequence is MSVQVVSAAA…KQQKNSKGNS (184 aa). Ser2 is subject to N-acetylserine. The LISN domain, inhibits interaction with ITPR1 stretch occupies residues 2 to 109; sequence SVQVVSAAAA…DGGEALVSPD (108 aa). Residue Ser107 is modified to Phosphoserine. The segment covering 135–144 has biased composition (basic residues); the sequence is RPTKIGRRSL. Residues 145–164 show a composition bias toward low complexity; that stretch reads SRSISQSSTDSYSSAASYTD. Phosphoserine occurs at positions 149, 152, 155, and 158. Residues Thr236, Asp310, and Glu335 each contribute to the substrate site. An NAD(+)-binding site is contributed by 336–338; it reads SVT. Substrate-binding residues include Lys365 and Asp369. NAD(+)-binding positions include Asn370, 401 to 406, Glu422, Asn457, 478 to 479, and Asn525; these read GEVGKG and MG.

It belongs to the adenosylhomocysteinase family. In terms of assembly, homotetramer. Forms heteromultimers with AHCYL1 (via the C-terminal region). Interacts with ITPR1; with lower affinity than AHCYL1 and maybe via ITPR1. Interacts with SLC4A4. Interacts with ZCCHC4. The cofactor is NAD(+). In terms of processing, phosphorylated during neuronal differentiation at the LISN domain. Expressed in parotid and acinar cells (at protein level).

It is found in the cytoplasm. The protein localises to the microsome. The catalysed reaction is S-adenosyl-L-homocysteine + H2O = L-homocysteine + adenosine. It participates in amino-acid biosynthesis; L-homocysteine biosynthesis; L-homocysteine from S-adenosyl-L-homocysteine: step 1/1. May regulate the electrogenic sodium/bicarbonate cotransporter SLC4A4 activity and Mg(2+)-sensitivity. On the contrary of its homolog AHCYL1, does not regulate ITPR1 sensitivity to inositol 1,4,5-trisphosphate. This chain is Adenosylhomocysteinase 3, found in Bos taurus (Bovine).